A 500-amino-acid chain; its full sequence is NAD(P)H-quinone oxidoreductase chain 4, chloroplastic (500 aa).

The next 14 helical transmembrane spans lie at 4 to 24, 35 to 55, 87 to 107, 113 to 130, 134 to 154, 167 to 187, 208 to 228, 242 to 262, 274 to 294, 305 to 325, 330 to 350, 386 to 406, 411 to 431, and 462 to 482; these read FPWL…IFFL, YTIC…CYHF, IGPI…AWPV, LFHF…GSFS, LLLF…LLCM, FILY…GLAL, VLEI…SPII, HYST…YGLI, SIFS…AALT, IAYS…SLTD, GALL…FLAG, LALP…GIIT, LLIP…LTPI, and LFLS…PDFV.

The protein belongs to the complex I subunit 4 family.

It is found in the plastid. The protein localises to the chloroplast thylakoid membrane. The enzyme catalyses a plastoquinone + NADH + (n+1) H(+)(in) = a plastoquinol + NAD(+) + n H(+)(out). The catalysed reaction is a plastoquinone + NADPH + (n+1) H(+)(in) = a plastoquinol + NADP(+) + n H(+)(out). In Nicotiana tabacum (Common tobacco), this protein is NAD(P)H-quinone oxidoreductase chain 4, chloroplastic (ndhD).